The following is a 160-amino-acid chain: UPF0479 membrane protein YER190C-B (160 aa).

A run of 2 helical transmembrane segments spans residues 39 to 59 (IVFCLPFFPALFFVPVQKVLQ) and 136 to 156 (VPMIWLDVFQVFFVFLVISQH).

It belongs to the UPF0479 family.

The protein resides in the membrane. The chain is UPF0479 membrane protein YER190C-B from Saccharomyces cerevisiae (strain ATCC 204508 / S288c) (Baker's yeast).